Consider the following 447-residue polypeptide: N-succinylarginine dihydrolase (447 aa).

Substrate-binding positions include 19–28 (AGLSFGNKAS), Asn-110, and 137–138 (HR). The active site involves Glu-174. Residue Arg-212 coordinates substrate. His-248 is a catalytic residue. Substrate-binding residues include Asp-250 and Asn-359. Cys-365 acts as the Nucleophile in catalysis.

It belongs to the succinylarginine dihydrolase family. As to quaternary structure, homodimer.

It catalyses the reaction N(2)-succinyl-L-arginine + 2 H2O + 2 H(+) = N(2)-succinyl-L-ornithine + 2 NH4(+) + CO2. It functions in the pathway amino-acid degradation; L-arginine degradation via AST pathway; L-glutamate and succinate from L-arginine: step 2/5. Catalyzes the hydrolysis of N(2)-succinylarginine into N(2)-succinylornithine, ammonia and CO(2). This is N-succinylarginine dihydrolase from Escherichia coli O157:H7.